Reading from the N-terminus, the 238-residue chain is MEHKAPLVEFLGLTFNLSDMLMITITCLIVFIIAVAATRSLQLRPTGMQNFMEWVFDFVRGIINSTMDWQTGGRFLTLGVTLIMYVFVANMLGLPFSVHVNGELWWKSPTADATVTLTLAVMVVALTHYYGVKMKGASDYLRDYTRPVAWLFPLKIIEEFANTLTLGLRLFGNIYAGEILLGLLASLGTHYGVLGAVGASQFPIMVWQAFSIFVGTIQAFIFTMLTMVYMAHKVSHDH.

A run of 5 helical transmembrane segments spans residues 17 to 37 (LSDM…AVAA), 75 to 95 (FLTL…LGLP), 112 to 132 (DATV…YYGV), 179 to 199 (ILLG…AVGA), and 202 to 222 (FPIM…AFIF).

The protein belongs to the ATPase A chain family. In terms of assembly, F-type ATPases have 2 components, CF(1) - the catalytic core - and CF(0) - the membrane proton channel. CF(1) has five subunits: alpha(3), beta(3), gamma(1), delta(1), epsilon(1). CF(0) has three main subunits: a(1), b(2) and c(9-12). The alpha and beta chains form an alternating ring which encloses part of the gamma chain. CF(1) is attached to CF(0) by a central stalk formed by the gamma and epsilon chains, while a peripheral stalk is formed by the delta and b chains.

It localises to the cell membrane. Functionally, key component of the proton channel; it plays a direct role in the translocation of protons across the membrane. The protein is ATP synthase subunit a of Bacillus sp. (strain PS3).